The chain runs to 717 residues: Transport/processing ATP-binding protein ComA (717 aa).

The Peptidase C39 domain occupies 11 to 138 (QVDQMDCGVA…EEWTGVTLFM (128 aa)). C17 is a catalytic residue. 7 helical membrane-spanning segments follow: residues 18-38 (GVAS…LAHL), 166-186 (GLIA…IVGS), 205-225 (LGII…LSYA), 237-257 (LSID…MSFF), 281-301 (STIL…LVLF), 306-326 (NLFF…FAFM), and 397-417 (VAHL…VMDG). Positions 168–450 (IANIVLATLL…IINLQTKLQT (283 aa)) constitute an ABC transmembrane type-1 domain. The 234-residue stretch at 484–717 (MTFKQVHYKY…GGFYAHLVNS (234 aa)) folds into the ABC transporter domain. Position 517 to 524 (517 to 524 (GISGSGKT)) interacts with ATP.

Belongs to the ABC transporter superfamily. HlyB family.

The protein resides in the cell membrane. Its function is as follows. Required for induction of competence. Seems to transport the competence-stimulating peptide (CSP). This chain is Transport/processing ATP-binding protein ComA (comA), found in Streptococcus pneumoniae (strain ATCC BAA-255 / R6).